Here is a 394-residue protein sequence, read N- to C-terminus: uncharacterized protein (394 aa).

A run of 11 helical transmembrane segments spans residues 10–30 (PALI…NYYA), 50–70 (FIVT…VPLG), 79–99 (IVSM…SQSL), 100–120 (AMMI…QILV), 138–158 (TIMS…GLLA), 166–186 (VFWV…RGLP), 218–238 (LLGC…AFLL), 243–263 (FNYS…GALG), 291–311 (WLAI…ILVL), 337–357 (LTAG…LISA), and 364–384 (GWAG…LVWW).

It belongs to the major facilitator superfamily.

It is found in the cell inner membrane. This is an uncharacterized protein from Escherichia coli O157:H7.